A 168-amino-acid chain; its full sequence is Transcription antitermination protein NusB (168 aa).

Belongs to the NusB family.

Functionally, involved in transcription antitermination. Required for transcription of ribosomal RNA (rRNA) genes. Binds specifically to the boxA antiterminator sequence of the ribosomal RNA (rrn) operons. The sequence is that of Transcription antitermination protein NusB from Deinococcus deserti (strain DSM 17065 / CIP 109153 / LMG 22923 / VCD115).